Here is a 545-residue protein sequence, read N- to C-terminus: MAKEIFFSDEARNKLYEGVKKLNDAVKVTMGPRGRNVLIQKSFGAPTITKDGVSVAKEVELKDSLENMGASLVREVASKTADQAGDGTTTATVLAHAIFKEGLRNITAGANPIEVKRGMDKACEAIVAELKKLSREVKDKKEIAQVATISANSDEKIGNLIADAMEKVGKDGVITVEEAKSINDELNVVEGMQFDRGYLSPYFITNTEKMTAELQNPFILLFDKKIANLKDLLPILEQIQKTGKPLLIIAEDIEGEALATLVVNKLRGVLNISAVKAPGFGDRRKAMLEDIAILTGGEVISEELGRTLESASIQDLGQASSVIIDKDNTTIVNGAGEKANINARINQIKAQIAETSSDYDREKLQERLAKLSGGVAVIKVGAATETEMKEKKDRVDDALSATKAAVEEGIVIGGGAALIKAKSKISLNLQGDEAIGAAIVERALRAPLRQIAENAGFDAGVVVNTVENSKEENTGFDAAKGEYVNMLESGIIDPVKVERVALLNAVSVASMLLTTEATISEIKEDKPAMPDMSGMGGMGGMGGMM.

ATP is bound by residues 29–32 (TMGP), Lys-50, 86–90 (DGTTT), Gly-414, 477–479 (DAA), and Asp-493.

This sequence belongs to the chaperonin (HSP60) family. In terms of assembly, forms a cylinder of 14 subunits composed of two heptameric rings stacked back-to-back. Interacts with the co-chaperonin GroES.

The protein localises to the cytoplasm. The catalysed reaction is ATP + H2O + a folded polypeptide = ADP + phosphate + an unfolded polypeptide.. Functionally, together with its co-chaperonin GroES, plays an essential role in assisting protein folding. The GroEL-GroES system forms a nano-cage that allows encapsulation of the non-native substrate proteins and provides a physical environment optimized to promote and accelerate protein folding. The polypeptide is Chaperonin GroEL (Campylobacter lari (strain RM2100 / D67 / ATCC BAA-1060)).